The sequence spans 238 residues: Probable tetraspanin tspC (238 aa).

Topologically, residues 1 to 16 (MVNTRDFLPKTTHYLK) are cytoplasmic. The helical transmembrane segment at 17-37 (VPIIGLNAILWLLGLVLIVVG) threads the bilayer. Topologically, residues 38-69 (SVCISFFSNFKEFTKESGYKNALSNLTTSAPT) are extracellular. A glycan (N-linked (GlcNAc...) asparagine) is linked at asparagine 62. Residues 70–90 (GVLVIGIFFILLTLVGCFVAY) traverse the membrane as a helical segment. Over 91–93 (KEK) the chain is Cytoplasmic. A helical transmembrane segment spans residues 94–114 (LVGLVLYTMLMLILLVVLIGI). The Extracellular segment spans residues 115-197 (GGKALTLDKE…GIFTKQVSSK (83 aa)). Asparagine 143 and asparagine 164 each carry an N-linked (GlcNAc...) asparagine glycan. A helical transmembrane segment spans residues 198–218 (LVLVGIAGVVIGCIEFVAMAL). Topologically, residues 219–238 (SLFLIIRICRSPRSRAYDQY) are cytoplasmic.

This sequence belongs to the tetraspanin (TM4SF) family.

The protein resides in the membrane. This Dictyostelium discoideum (Social amoeba) protein is Probable tetraspanin tspC (tspC).